Consider the following 339-residue polypeptide: Dehydrogenase/reductase SDR family member 7 (339 aa).

The N-terminal stretch at 1 to 28 is a signal peptide; that stretch reads MNWELLLWLLVLCALLLLLVQLLRFLRA. NAD(+) is bound by residues serine 60 and isoleucine 62. Position 190 (serine 190) interacts with substrate. Residues tyrosine 203, lysine 207, and serine 239 each contribute to the NAD(+) site. Tyrosine 203 (proton acceptor) is an active-site residue.

The protein belongs to the short-chain dehydrogenases/reductases (SDR) family. In terms of tissue distribution, found predominantly in the adrenal glands, liver, thyroid, prostate, small intestine, colon, stomach, kidney and brain. Lower levels observed in skeletal muscle, the lung and the spleen.

It is found in the endoplasmic reticulum membrane. The enzyme catalyses all-trans-retinol + NADP(+) = all-trans-retinal + NADPH + H(+). The catalysed reaction is 5alpha-androstane-3alpha,17beta-diol + NADP(+) = 17beta-hydroxy-5alpha-androstan-3-one + NADPH + H(+). Its function is as follows. NADPH-dependent oxidoreductase which catalyzes the reduction of a variety of compounds bearing carbonyl groups including steroids, retinoids and xenobiotics. Catalyzes the reduction/inactivation of 5alpha-dihydrotestosterone to 3alpha-androstanediol, with a possible role in the modulation of androgen receptor function. Involved in the reduction of all-trans-retinal to all-trans-retinol. Converts cortisone to 20beta-dihydrocortisone in vitro, although the physiological relevance of this activity is questionable. Reduces exogenous compounds such as quinones (1,2-naphtoquinone, 9,10-phenantrenequinone and benzoquinone) and other xenobiotics (alpha-diketones) in vitro, suggesting a role in the biotransformation of xenobiotics with carbonyl group. A dehydrogenase activity has not been detected so far. May play a role as tumor suppressor. The polypeptide is Dehydrogenase/reductase SDR family member 7 (Homo sapiens (Human)).